Reading from the N-terminus, the 40-residue chain is Photosystem II reaction center protein J (40 aa).

Residues isoleucine 8 to phenylalanine 28 traverse the membrane as a helical segment.

It belongs to the PsbJ family. As to quaternary structure, PSII is composed of 1 copy each of membrane proteins PsbA, PsbB, PsbC, PsbD, PsbE, PsbF, PsbH, PsbI, PsbJ, PsbK, PsbL, PsbM, PsbT, PsbX, PsbY, PsbZ, Psb30/Ycf12, at least 3 peripheral proteins of the oxygen-evolving complex and a large number of cofactors. It forms dimeric complexes.

It localises to the plastid. The protein localises to the chloroplast thylakoid membrane. Its function is as follows. One of the components of the core complex of photosystem II (PSII). PSII is a light-driven water:plastoquinone oxidoreductase that uses light energy to abstract electrons from H(2)O, generating O(2) and a proton gradient subsequently used for ATP formation. It consists of a core antenna complex that captures photons, and an electron transfer chain that converts photonic excitation into a charge separation. The protein is Photosystem II reaction center protein J of Nasturtium officinale (Watercress).